We begin with the raw amino-acid sequence, 108 residues long: Synaptic plasticity regulator PANTS (108 aa).

The tract at residues 58–108 (KNHSTQAKDSLQESERKRLADQRKFTPVWELRQKPPSDWHLPLNQGEPQDP) is disordered. Residues 67–81 (SLQESERKRLADQRK) are compositionally biased toward basic and acidic residues.

Belongs to the UPF0545 family. Post-translationally, rapidly degraded by proteolysis following neuronal stimulation, resulting in increased AMPA receptor clustering.

Its subcellular location is the synapse. The protein resides in the synaptic cleft. Negatively regulates long-term potentiation and modulates adult synaptic plasticity. This chain is Synaptic plasticity regulator PANTS, found in Danio rerio (Zebrafish).